A 432-amino-acid polypeptide reads, in one-letter code: MKRNTIDIITLGCSKNLVDSEKLMRQLEANGYKVTHDSDKPQGEIAVINTCGFIGDAKEESINMILEFCQAKEEGKLKKLYVMGCLSERYLKELALEIPQVDKFYGKFNWNELLADLGKAYKSEFAIERTLTTPHHYAYLKISEGCDRKCSYCAIPIITGRHISRPMEEIIDEVKLLVSEGVKEFQIIAQELTYYGVDLYKSQKLPELIERIANVPGVEWIRLHYAYPAHFPEELFRVMREHDNVCKYMDIALQHISDNMLNKMRRHVSKAETYELIEKFRREVPGIHLRTTLMVGHPGETEEDFEELKEFVKKVRFDRMGAFAYSEEEGTFAAKEYEDSISHEVKQQRLDELMALQQEIAGELSQTKIGKEFKVIIDRKEGDYYIGRTQFDSPEVDPEVLIKADEEYLKIGEFYKVKITAADDFDLYASIL.

In terms of domain architecture, MTTase N-terminal spans 4-122 (NTIDIITLGC…LLADLGKAYK (119 aa)). [4Fe-4S] cluster-binding residues include Cys-13, Cys-51, Cys-85, Cys-146, Cys-150, and Cys-153. Residues 132–363 (TTPHHYAYLK…MALQQEIAGE (232 aa)) form the Radical SAM core domain. The TRAM domain maps to 366–432 (QTKIGKEFKV…DDFDLYASIL (67 aa)).

It belongs to the methylthiotransferase family. RimO subfamily. [4Fe-4S] cluster is required as a cofactor.

The protein localises to the cytoplasm. The enzyme catalyses L-aspartate(89)-[ribosomal protein uS12]-hydrogen + (sulfur carrier)-SH + AH2 + 2 S-adenosyl-L-methionine = 3-methylsulfanyl-L-aspartate(89)-[ribosomal protein uS12]-hydrogen + (sulfur carrier)-H + 5'-deoxyadenosine + L-methionine + A + S-adenosyl-L-homocysteine + 2 H(+). Functionally, catalyzes the methylthiolation of an aspartic acid residue of ribosomal protein uS12. The sequence is that of Ribosomal protein uS12 methylthiotransferase RimO from Phocaeicola vulgatus (strain ATCC 8482 / DSM 1447 / JCM 5826 / CCUG 4940 / NBRC 14291 / NCTC 11154) (Bacteroides vulgatus).